A 225-amino-acid polypeptide reads, in one-letter code: MAARQTLRVLCLAGFRQSERGFREKTGALRKTLRGRAELVCLSGPHPVPEAAAPEGSCPDSGPCSPEEQPRGWWFSEEEADVFSALEESTVCRGLQEALETVARALDTLGPFDGLLGFSQGAALAAYVCALGQAGDPRFPLPRFIILVSGFCPRGLKEPILQSPMSLPSLHVFGDTDRVIPSQESMQLASRFLGAVTLTHSGGHFIPAAASQRQAYLKFLDQFAE.

Active-site charge relay system residues include Ser-119, Asp-177, and His-204.

This sequence belongs to the LovG family. As to expression, strongly expressed in kidney and liver. Moderately expressed in brain, skin and testis. Weakly expressed in heart, lung, small intestine, spleen, stomach and thymus.

It catalyses the reaction a carboxylic ester + H2O = an alcohol + a carboxylate + H(+). Its function is as follows. Exhibits ester hydrolase activity with a strong preference for long-chain alkyl ester substrates and high selectivity against a variety of short, branched, and substituted esters. Is able to hydrolyze ester bonds within a wide range of p-nitrophenyl derivatives (C2-C14) in vitro, with a strong preference toward substrates of &gt;8 carbons. The polypeptide is Esterase OVCA2 (Ovca2) (Mus musculus (Mouse)).